Consider the following 100-residue polypeptide: A-type ATP synthase subunit F (100 aa).

The protein belongs to the V-ATPase F subunit family. In terms of assembly, has multiple subunits with at least A(3), B(3), C, D, E, F, H, I and proteolipid K(x).

The protein resides in the cell membrane. In terms of biological role, component of the A-type ATP synthase that produces ATP from ADP in the presence of a proton gradient across the membrane. This chain is A-type ATP synthase subunit F, found in Methanospirillum hungatei JF-1 (strain ATCC 27890 / DSM 864 / NBRC 100397 / JF-1).